The sequence spans 605 residues: MSFLPVTRGEALKRGWDELDIVFVTGDAYVDHPAFGVPLLARWLEFHGFRVGIIPQPDWRSCEPFMALGRPRLFFAVSSGAMDSMVAHYTPARKLRHDDAYTPGNRHGARPNRATIVYTSRLKEAYRDVPVVIGGIEASLRRFAHYDYWEDKVRRSLLLDAKADLLVHGMGERPILELARRVRTGEPFQAIADIRGTAVVLGRGAAPPAGVVELPPFEEVAADRHRYAEAFRLLSREQNPHCAHPLVQRHGDRTLLCNPPAYPLEEAELDSVYALPFQRAPHPSHGEPIPAYEQIRASVTTHRGCFGGCSFCAITHHQGKVIQSRSERSVLAEVERMAAMAWFRGSVSDVGGPTANMYGVHCGNTRGGHACRRESCLYPSPCRYLAVGGERGAALLRAVRGVRGVRNVAVSSGIRYDLMERQPAYFRELVAHHVGGLLKVAPEHMVARVTDLMRKPGKESFDRFLERFRRESARLGKKQYIIPYLMSGHPGCTLDDMVELALFLKRAGLRVEQVQDFTPTPGTLSTCMYHTGLDPFAGAPVHVPRGDREKRLQKALLLWHLPTERRNVLDALRACGRESVARELLGGAAGGGGGRSGSGFRPGRT.

Residues 291 to 561 (AYEQIRASVT…LQKALLLWHL (271 aa)) form the Radical SAM core domain. 3 residues coordinate [4Fe-4S] cluster: cysteine 305, cysteine 309, and cysteine 312. The segment at 586–605 (GGAAGGGGGRSGSGFRPGRT) is disordered. Residues 587–597 (GAAGGGGGRSG) are compositionally biased toward gly residues.

It belongs to the UPF0313 family. The cofactor is [4Fe-4S] cluster.

The polypeptide is UPF0313 protein GSU2873 (Geobacter sulfurreducens (strain ATCC 51573 / DSM 12127 / PCA)).